The sequence spans 561 residues: Tetracenomycin A2 monooxygenase-dioxygenase (561 aa).

Positions 15, 35, 128, and 152 each coordinate FAD. Residue Y231 is the Proton acceptor of the active site. Position 322 (D322) interacts with FAD.

This sequence belongs to the PheA/TfdB FAD monooxygenase family. Monomer. May form oligomers up to homohexamers. FAD serves as cofactor.

The enzyme catalyses tetracenomycin A2 + 2 NADPH + 2 O2 + 2 H(+) = tetracenomycin C + 2 NADP(+) + H2O. It functions in the pathway antibiotic biosynthesis; tetracenomycin C biosynthesis. Its function is as follows. Involved in the biosynthesis of tetracenomycin C (TCM C). Catalyzes the triple hydroxylation of tetracenomycin A2 (TCM A2) at positions C-4, C-4a and C-12a to give tetracenomycin C (TCM C). Can use either NADH or NADPH as electron donors, but prefers NADPH under physiological conditions. The sequence is that of Tetracenomycin A2 monooxygenase-dioxygenase from Streptomyces glaucescens.